The chain runs to 251 residues: 3-deoxy-manno-octulosonate cytidylyltransferase (251 aa).

This sequence belongs to the KdsB family.

It is found in the cytoplasm. The enzyme catalyses 3-deoxy-alpha-D-manno-oct-2-ulosonate + CTP = CMP-3-deoxy-beta-D-manno-octulosonate + diphosphate. It functions in the pathway nucleotide-sugar biosynthesis; CMP-3-deoxy-D-manno-octulosonate biosynthesis; CMP-3-deoxy-D-manno-octulosonate from 3-deoxy-D-manno-octulosonate and CTP: step 1/1. It participates in bacterial outer membrane biogenesis; lipopolysaccharide biosynthesis. Functionally, activates KDO (a required 8-carbon sugar) for incorporation into bacterial lipopolysaccharide in Gram-negative bacteria. This Rhizobium leguminosarum bv. trifolii (strain WSM2304) protein is 3-deoxy-manno-octulosonate cytidylyltransferase.